Reading from the N-terminus, the 402-residue chain is Phosphoglycerate kinase (402 aa).

Substrate is bound by residues 24–26 (DFN), arginine 40, 63–66 (HFGR), arginine 122, and arginine 155. Residues lysine 206, glycine 297, glutamate 328, and 358 to 361 (GGDS) each bind ATP.

The protein belongs to the phosphoglycerate kinase family. Monomer.

The protein localises to the cytoplasm. It catalyses the reaction (2R)-3-phosphoglycerate + ATP = (2R)-3-phospho-glyceroyl phosphate + ADP. It functions in the pathway carbohydrate degradation; glycolysis; pyruvate from D-glyceraldehyde 3-phosphate: step 2/5. In Prochlorococcus marinus (strain MIT 9515), this protein is Phosphoglycerate kinase.